An 80-amino-acid chain; its full sequence is Small ribosomal subunit protein bS18 (80 aa).

This sequence belongs to the bacterial ribosomal protein bS18 family. Part of the 30S ribosomal subunit. Forms a tight heterodimer with protein bS6.

In terms of biological role, binds as a heterodimer with protein bS6 to the central domain of the 16S rRNA, where it helps stabilize the platform of the 30S subunit. The polypeptide is Small ribosomal subunit protein bS18 (Staphylococcus saprophyticus subsp. saprophyticus (strain ATCC 15305 / DSM 20229 / NCIMB 8711 / NCTC 7292 / S-41)).